The chain runs to 190 residues: Transcription termination/antitermination protein NusG (190 aa).

Residues 141–165 (GDMVRVTSGPFADFSGVVSEVNAPQ) enclose the KOW domain.

This sequence belongs to the NusG family.

Participates in transcription elongation, termination and antitermination. The chain is Transcription termination/antitermination protein NusG from Deinococcus radiodurans (strain ATCC 13939 / DSM 20539 / JCM 16871 / CCUG 27074 / LMG 4051 / NBRC 15346 / NCIMB 9279 / VKM B-1422 / R1).